Here is a 157-residue protein sequence, read N- to C-terminus: MLDANQGTLAASDSRLNGKKLRIGIVQARFNEPITNTLAQACKAELLALGVAEKHIDLVQVPGALEVPVALLALAEKLEYDALVAVGCIIRGETYHFELVANESGAGVSRVALDYQIPIANAILTTENLAQAIARQTEKGRDAARVAVEMANLLSDI.

5-amino-6-(D-ribitylamino)uracil contacts are provided by residues F30, 64–66 (ALE), and 88–90 (CII). 93 to 94 (ET) contributes to the (2S)-2-hydroxy-3-oxobutyl phosphate binding site. H96 functions as the Proton donor in the catalytic mechanism. N121 is a binding site for 5-amino-6-(D-ribitylamino)uracil. R135 is a (2S)-2-hydroxy-3-oxobutyl phosphate binding site.

The protein belongs to the DMRL synthase family.

It carries out the reaction (2S)-2-hydroxy-3-oxobutyl phosphate + 5-amino-6-(D-ribitylamino)uracil = 6,7-dimethyl-8-(1-D-ribityl)lumazine + phosphate + 2 H2O + H(+). It participates in cofactor biosynthesis; riboflavin biosynthesis; riboflavin from 2-hydroxy-3-oxobutyl phosphate and 5-amino-6-(D-ribitylamino)uracil: step 1/2. In terms of biological role, catalyzes the formation of 6,7-dimethyl-8-ribityllumazine by condensation of 5-amino-6-(D-ribitylamino)uracil with 3,4-dihydroxy-2-butanone 4-phosphate. This is the penultimate step in the biosynthesis of riboflavin. This is 6,7-dimethyl-8-ribityllumazine synthase from Albidiferax ferrireducens (strain ATCC BAA-621 / DSM 15236 / T118) (Rhodoferax ferrireducens).